The sequence spans 441 residues: Amino-acid acetyltransferase (441 aa).

Residues 295 to 434 (EQIRRANIND…QALYNYQRRS (140 aa)) enclose the N-acetyltransferase domain.

The protein belongs to the acetyltransferase family. ArgA subfamily. In terms of assembly, homohexamer.

It localises to the cytoplasm. It carries out the reaction L-glutamate + acetyl-CoA = N-acetyl-L-glutamate + CoA + H(+). Its pathway is amino-acid biosynthesis; L-arginine biosynthesis; N(2)-acetyl-L-ornithine from L-glutamate: step 1/4. The chain is Amino-acid acetyltransferase from Edwardsiella ictaluri (strain 93-146).